Consider the following 130-residue polypeptide: Small ribosomal subunit protein uS11 (130 aa).

The protein belongs to the universal ribosomal protein uS11 family. In terms of assembly, part of the 30S ribosomal subunit. Interacts with proteins S7 and S18. Binds to IF-3.

In terms of biological role, located on the platform of the 30S subunit, it bridges several disparate RNA helices of the 16S rRNA. Forms part of the Shine-Dalgarno cleft in the 70S ribosome. The polypeptide is Small ribosomal subunit protein uS11 (Shewanella frigidimarina (strain NCIMB 400)).